A 186-amino-acid chain; its full sequence is Elongation factor P (186 aa).

Belongs to the elongation factor P family.

It localises to the cytoplasm. The protein operates within protein biosynthesis; polypeptide chain elongation. In terms of biological role, involved in peptide bond synthesis. Stimulates efficient translation and peptide-bond synthesis on native or reconstituted 70S ribosomes in vitro. Probably functions indirectly by altering the affinity of the ribosome for aminoacyl-tRNA, thus increasing their reactivity as acceptors for peptidyl transferase. This is Elongation factor P from Shewanella baltica (strain OS223).